A 425-amino-acid polypeptide reads, in one-letter code: Dihydroorotase (425 aa).

Zn(2+) is bound by residues histidine 56 and histidine 58. Substrate is bound by residues 58–60 (HYR) and asparagine 90. Residues aspartate 148, histidine 175, and histidine 228 each coordinate Zn(2+). Residue asparagine 274 coordinates substrate. Aspartate 301 provides a ligand contact to Zn(2+). Residue aspartate 301 is part of the active site. Substrate-binding positions include histidine 305 and 319–320 (FG).

It belongs to the metallo-dependent hydrolases superfamily. DHOase family. Class I DHOase subfamily. It depends on Zn(2+) as a cofactor.

The catalysed reaction is (S)-dihydroorotate + H2O = N-carbamoyl-L-aspartate + H(+). It functions in the pathway pyrimidine metabolism; UMP biosynthesis via de novo pathway; (S)-dihydroorotate from bicarbonate: step 3/3. Catalyzes the reversible cyclization of carbamoyl aspartate to dihydroorotate. The protein is Dihydroorotase of Lactobacillus johnsonii (strain CNCM I-12250 / La1 / NCC 533).